We begin with the raw amino-acid sequence, 765 residues long: MVKAISSNLGYPRLGEKREWKRALEKFWNGTITEEELLAETKALRLHALKKQQEKGIDLIPVGDFSFYDQVLDTSVTFGIIPKRFQHEGGNVSLNTYFDIARGKNDAVASEMTKWFNTNYHYIVPELADANPKLLNNRALYYYEEAKKELGIEGKPVLVGPITYLKLGKGSNAESFEVLLDKFIPAYIEILEELETAGVEWVQIDEPYLATSFEKKEIALFEKVYQSFQEAVPNLKIELQTYFESLDYYEEVVNLPVAAIGIDFVHDHGDSLQALKTYGFPQDKYLAAGVIDGRNVWRSNLDAKLALLTDIAHYVAKDKLIVQPSNSLLHVPVTKLSEPDLDEVILGGLSFADQKLDEIVILTKALTEGVESVAKELEEARKAVKVLNESSHRNNLEVQAAIANLKNVRVDRELVFAERIKLQHAWLNLPLFPTTTIGSFPQSPEVRKTRADWLKGNITDAEYNAFIEKETARWIKIQEELDIDVLVHGEFERTDMVEYFGQKLAGFQATKFGWVQSYGSRAVRPPLIYGDVAFTEEITVKESVYAQSLTKRPVKGMLTAPVTIINWSFVRDDVPESVVANQVGLALRKEVEALERNGIKVIQVDEPALREGLPLKQARWEKYLNDAVYSFKLTTASVQNDTQIHTHMCYSDFDDIIDTISALDADVISIETSRSHGEIISTFEEVTYDKEIGLGVYDIHSPRVPTVTEIQDNIRRALRAIDAKQFWINPDCGLKTRQEPETIAALQDMIKATKEVRAEYQVLEK.

5-methyltetrahydropteroyltri-L-glutamate contacts are provided by residues 18–21 and lysine 114; that span reads REWK. L-homocysteine is bound by residues 437-439 and glutamate 490; that span reads IGS. L-methionine-binding positions include 437–439 and glutamate 490; that span reads IGS. Residue tryptophan 567 participates in 5-methyltetrahydropteroyltri-L-glutamate binding. Aspartate 605 contributes to the L-homocysteine binding site. Aspartate 605 contributes to the L-methionine binding site. Position 611 (glutamate 611) interacts with 5-methyltetrahydropteroyltri-L-glutamate. Zn(2+)-binding residues include histidine 647, cysteine 649, and glutamate 671. The active-site Proton donor is histidine 700. Cysteine 732 is a binding site for Zn(2+).

This sequence belongs to the vitamin-B12 independent methionine synthase family. Zn(2+) serves as cofactor.

The catalysed reaction is 5-methyltetrahydropteroyltri-L-glutamate + L-homocysteine = tetrahydropteroyltri-L-glutamate + L-methionine. It participates in amino-acid biosynthesis; L-methionine biosynthesis via de novo pathway; L-methionine from L-homocysteine (MetE route): step 1/1. Its function is as follows. Catalyzes the transfer of a methyl group from 5-methyltetrahydrofolate to homocysteine resulting in methionine formation. The sequence is that of 5-methyltetrahydropteroyltriglutamate--homocysteine methyltransferase from Listeria welshimeri serovar 6b (strain ATCC 35897 / DSM 20650 / CCUG 15529 / CIP 8149 / NCTC 11857 / SLCC 5334 / V8).